Here is a 378-residue protein sequence, read N- to C-terminus: Sterol 24-C-methyltransferase erg6 (378 aa).

Belongs to the class I-like SAM-binding methyltransferase superfamily. Erg6/SMT family.

Its subcellular location is the nucleus. The protein localises to the endoplasmic reticulum. The enzyme catalyses zymosterol + S-adenosyl-L-methionine = fecosterol + S-adenosyl-L-homocysteine + H(+). The catalysed reaction is lanosterol + S-adenosyl-L-methionine = eburicol + S-adenosyl-L-homocysteine + H(+). The protein operates within steroid metabolism; ergosterol biosynthesis. Sterol 24-C-methyltransferase; part of the third module of ergosterol biosynthesis pathway that includes by the late steps of the pathway. Erg6 catalyzes the methyl transfer from S-adenosyl-methionine to the C-24 of zymosterol to form fecosterol. The third module or late pathway involves the ergosterol synthesis itself through consecutive reactions that mainly occur in the endoplasmic reticulum (ER) membrane. Firstly, the squalene synthase erg9 catalyzes the condensation of 2 farnesyl pyrophosphate moieties to form squalene, which is the precursor of all steroids. Secondly, squalene is converted into lanosterol by the consecutive action of the squalene epoxidase erg1 and the lanosterol synthase erg7. The lanosterol 14-alpha-demethylase erg11/cyp1 catalyzes C14-demethylation of lanosterol to produce 4,4'-dimethyl cholesta-8,14,24-triene-3-beta-ol. In the next steps, a complex process involving various demethylation, reduction and desaturation reactions catalyzed by the C-14 reductase erg24 and the C-4 demethylation complex erg25-erg26-erg27 leads to the production of zymosterol. Erg28 likely functions in the C-4 demethylation complex reaction by tethering erg26 and Erg27 to the endoplasmic reticulum or to facilitate interaction between these proteins. Then, the sterol 24-C-methyltransferase erg6 catalyzes the methyl transfer from S-adenosyl-methionine to the C-24 of zymosterol to form fecosterol. The C-8 sterol isomerase erg2 catalyzes the reaction which results in unsaturation at C-7 in the B ring of sterols and thus converts fecosterol to episterol. The sterol-C5-desaturases erg31 and erg32 then catalyze the introduction of a C-5 double bond in the B ring to produce 5-dehydroepisterol. The C-22 sterol desaturase erg5 further converts 5-dehydroepisterol into ergosta-5,7,22,24(28)-tetraen-3beta-ol by forming the C-22(23) double bond in the sterol side chain. Finally, ergosta-5,7,22,24(28)-tetraen-3beta-ol is substrate of the C-24(28) sterol reductase erg4 to produce ergosterol. In the genus Schizosaccharomyces, a second route exists between lanosterol and fecosterol, via the methylation of lanosterol to eburicol by erg6, followed by C14-demethylation by erg11/cyp1 and C4-demethylation by the demethylation complex erg25-erg26-erg27. The chain is Sterol 24-C-methyltransferase erg6 from Schizosaccharomyces pombe (strain 972 / ATCC 24843) (Fission yeast).